Consider the following 462-residue polypeptide: Arginine-specific demethylase JMJ20 (462 aa).

The region spanning Val115 to Tyr287 is the JmjC domain. 3 residues coordinate Fe cation: His177, Asp179, and His255.

The protein belongs to the JARID1 histone demethylase family. It depends on Fe(2+) as a cofactor. As to expression, mostly expressed in leaves, and, to a lower extent, in inflorescences, roots, siliques and stems.

The protein resides in the nucleus. It carries out the reaction N(omega),N(omega)-dimethyl-L-arginyl-[protein] + 2-oxoglutarate + O2 = N(omega)-methyl-L-arginyl-[protein] + formaldehyde + succinate + CO2. Histone demethylase that demethylates 'Arg-3' (H4R3me) of histone H4 with a specific activity for H4R3me2. Involved in the positive regulation of gene expression. Together with JMJ22, positively regulates seed germination by promoting the removal of repressive histone arginine methylations (e.g. H4R3me2) at GA3ox1 and GA3ox2 to trigger gibberellic acid (GA) biosynthesis. The protein is Arginine-specific demethylase JMJ20 of Arabidopsis thaliana (Mouse-ear cress).